Consider the following 507-residue polypeptide: Histidine ammonia-lyase (507 aa).

The segment at residues 141–143 is a cross-link (5-imidazolinone (Ala-Gly)); sequence ASG. Residue Ser-142 is modified to 2,3-didehydroalanine (Ser).

It belongs to the PAL/histidase family. Contains an active site 4-methylidene-imidazol-5-one (MIO), which is formed autocatalytically by cyclization and dehydration of residues Ala-Ser-Gly.

It is found in the cytoplasm. It catalyses the reaction L-histidine = trans-urocanate + NH4(+). It functions in the pathway amino-acid degradation; L-histidine degradation into L-glutamate; N-formimidoyl-L-glutamate from L-histidine: step 1/3. The sequence is that of Histidine ammonia-lyase from Burkholderia pseudomallei (strain 668).